We begin with the raw amino-acid sequence, 506 residues long: GMP synthase [glutamine-hydrolyzing] (506 aa).

In terms of domain architecture, Glutamine amidotransferase type-1 spans 4–192 (KLIILDFGSQ…FLDICGMKRD (189 aa)). C79 functions as the Nucleophile in the catalytic mechanism. Residues H167 and E169 contribute to the active site. The region spanning 193–381 (WTPASFIEAT…LGMMPHLIHR (189 aa)) is the GMPS ATP-PPase domain. ATP is bound at residue 220-226 (SGGVDSS).

Homodimer.

The catalysed reaction is XMP + L-glutamine + ATP + H2O = GMP + L-glutamate + AMP + diphosphate + 2 H(+). Its pathway is purine metabolism; GMP biosynthesis; GMP from XMP (L-Gln route): step 1/1. In terms of biological role, catalyzes the synthesis of GMP from XMP. The protein is GMP synthase [glutamine-hydrolyzing] of Porphyromonas gingivalis (strain ATCC BAA-308 / W83).